The following is a 438-amino-acid chain: Adenosylhomocysteinase (438 aa).

Residues Thr61, Asp137, and Glu162 each contribute to the substrate site. 163 to 165 (TTT) contributes to the NAD(+) binding site. Substrate-binding residues include Lys192 and Asp196. NAD(+)-binding positions include Asn197, 226 to 231 (GYGDVG), Glu249, Asn284, 305 to 307 (IGH), and Asn352.

Belongs to the adenosylhomocysteinase family. The cofactor is NAD(+).

It is found in the cytoplasm. It catalyses the reaction S-adenosyl-L-homocysteine + H2O = L-homocysteine + adenosine. Its pathway is amino-acid biosynthesis; L-homocysteine biosynthesis; L-homocysteine from S-adenosyl-L-homocysteine: step 1/1. May play a key role in the regulation of the intracellular concentration of adenosylhomocysteine. The chain is Adenosylhomocysteinase from Flavobacterium johnsoniae (strain ATCC 17061 / DSM 2064 / JCM 8514 / BCRC 14874 / CCUG 350202 / NBRC 14942 / NCIMB 11054 / UW101) (Cytophaga johnsonae).